Here is a 75-residue protein sequence, read N- to C-terminus: Small ribosomal subunit protein bS18 (75 aa).

It belongs to the bacterial ribosomal protein bS18 family. Part of the 30S ribosomal subunit. Forms a tight heterodimer with protein bS6.

Its function is as follows. Binds as a heterodimer with protein bS6 to the central domain of the 16S rRNA, where it helps stabilize the platform of the 30S subunit. In Alteromonas mediterranea (strain DSM 17117 / CIP 110805 / LMG 28347 / Deep ecotype), this protein is Small ribosomal subunit protein bS18.